The primary structure comprises 327 residues: MSTATFTLGIVGARGYTGAALITLLTAHPAIELIFVSSREYHGQPVAAHNPTYCGDLRFETLDPAAVAAKRADVVILALPNGNAAPYVHAIDATAPPTLIIDLSADTRFDPDWYYGLPELTRHTYTGQKRISNPGCYATAMQLAIAPLRDQLAGPPQCFGVSGYSGAGTTPSDKNNQALLRDNLMPYALTDHLHEREVSAQLGIPVEFMPHVAPHFRGITLTANLWLQRPLTREHIKTLYATRYANDPLIDIIDPPPWVNQIAARHTVQIGAFTMAPGNKRVVIVATLDNLLKGAATQALQNLNRALGLDELTAIPYQPNPVPSPIP.

Cys-136 is an active-site residue.

It belongs to the NAGSA dehydrogenase family. Type 1 subfamily.

It localises to the cytoplasm. The catalysed reaction is N-acetyl-L-glutamate 5-semialdehyde + phosphate + NADP(+) = N-acetyl-L-glutamyl 5-phosphate + NADPH + H(+). It functions in the pathway amino-acid biosynthesis; L-arginine biosynthesis; N(2)-acetyl-L-ornithine from L-glutamate: step 3/4. Functionally, catalyzes the NADPH-dependent reduction of N-acetyl-5-glutamyl phosphate to yield N-acetyl-L-glutamate 5-semialdehyde. This is N-acetyl-gamma-glutamyl-phosphate reductase from Xylella fastidiosa (strain M23).